The sequence spans 119 residues: MORF4 family associated protein 1 like 2 (119 aa).

The span at 1–16 (MRPVDADEAREPREEP) shows a compositional bias: basic and acidic residues. The disordered stretch occupies residues 1 to 36 (MRPVDADEAREPREEPGSPLSPAPRAGRENLASLER).

Belongs to the MORF4 family-associated protein family. As to quaternary structure, may interact with CDK2AP1.

Functionally, may play a role in cell proliferation. This Homo sapiens (Human) protein is MORF4 family associated protein 1 like 2.